The following is a 154-amino-acid chain: Ribonuclease K6 (154 aa).

The signal sequence occupies residues 1–27 (MGPHLLGRSSLLLLLLGMWWSVRPLCA). The Proton acceptor role is filled by histidine 42. Disulfide bonds link cysteine 50–cysteine 108, cysteine 64–cysteine 118, cysteine 82–cysteine 133, and cysteine 89–cysteine 96. Asparagine 59 carries an N-linked (GlcNAc...) asparagine glycan. Substrate contacts are provided by residues 65 to 69 (KPENT) and lysine 90. N-linked (GlcNAc...) asparagine glycosylation is present at asparagine 104. Histidine 149 acts as the Proton donor in catalysis.

This sequence belongs to the pancreatic ribonuclease family. Interacts (via N-terminus) with bacterial lipopolysaccharide (LPS). As to expression, kidney (at protein level).

Its subcellular location is the secreted. It is found in the lysosome. It localises to the cytoplasmic granule. Its function is as follows. Ribonuclease which shows a preference for the pyrimidines uridine and cytosine. Has potent antimicrobial activity against a range of Gram-positive and Gram-negative bacteria, including P.aeruginosa, A.baumanii, M.luteus, S.aureus, E.faecalis, E.faecium, S.saprophyticus and E.coli. Causes loss of bacterial membrane integrity, and also promotes agglutination of Gram-negative bacteria. Probably contributes to urinary tract sterility. Bactericidal activity is independent of RNase activity. The protein is Ribonuclease K6 (RNASE6) of Bos taurus (Bovine).